Consider the following 239-residue polypeptide: MICOS complex subunit mic25a (239 aa).

The N-myristoyl glycine moiety is linked to residue G2. 2 disordered regions span residues 27 to 88 (VKLS…KKRY) and 113 to 133 (DISRAVQRERAQTRQESERAK). The span at 50-78 (NKENQGHQTRTPSTSDAQAPKTQAKTTFP) shows a compositional bias: polar residues. Positions 79-88 (DSKEELKKRY) are enriched in basic and acidic residues. Residues 79 to 166 (DSKEELKKRY…ITQLEKKNEE (88 aa)) are a coiled coil. Residues 192-234 (EPVCLNLQAQILNCYRENREQTLQCSDLAKEYMQCINAAKKNL) enclose the CHCH domain. 2 short sequence motifs (cx9C motif) span residues 195–205 (CLNLQAQILNC) and 216–226 (CSDLAKEYMQC). 2 disulfide bridges follow: C195–C226 and C205–C216.

Belongs to the MICOS complex subunit Mic19 family. Metazoan Mic25 subfamily. As to quaternary structure, component of the mitochondrial contact site and cristae organizing system (MICOS) complex (also known as MINOS or MitOS complex).

The protein resides in the mitochondrion inner membrane. In terms of biological role, component of the MICOS complex, a large protein complex of the mitochondrial inner membrane that plays crucial roles in the maintenance of crista junctions, inner membrane architecture, and formation of contact sites to the outer membrane. This chain is MICOS complex subunit mic25a (chchd6a), found in Danio rerio (Zebrafish).